Here is a 171-residue protein sequence, read N- to C-terminus: Co-chaperone protein HscB (171 aa).

The 73-residue stretch at 2–74 (DYFTLFGLPA…LTRAEYLLSL (73 aa)) folds into the J domain.

This sequence belongs to the HscB family. Interacts with HscA and stimulates its ATPase activity. Interacts with IscU.

Functionally, co-chaperone involved in the maturation of iron-sulfur cluster-containing proteins. Seems to help targeting proteins to be folded toward HscA. The sequence is that of Co-chaperone protein HscB from Salmonella choleraesuis (strain SC-B67).